An 888-amino-acid polypeptide reads, in one-letter code: Autotaxin (888 aa).

Positions 1-27 are cleaved as a signal peptide; it reads MARRRSCQLHQVISLFTFAVGVNICLG. Residues 28 to 35 constitute a propeptide, removed by furin; sequence VTANRIKR. N-linked (GlcNAc...) asparagine glycosylation occurs at Asn-54. SMB domains lie at 55–98 and 99–143; these read ISGS…LKTA and GGWE…GESH. Cystine bridges form between Cys-59-Cys-76, Cys-63-Cys-94, Cys-74-Cys-87, Cys-80-Cys-86, Cys-103-Cys-120, Cys-108-Cys-138, Cys-118-Cys-131, Cys-124-Cys-130, Cys-149-Cys-195, and Cys-157-Cys-351. The short motif at 127–129 is the Cell attachment site element; it reads RGD. A phosphodiesterase region spans residues 145–502; it reads VDDDCEEIKT…PTFKYKTKVP (358 aa). Positions 172 and 210 each coordinate Zn(2+). The active-site Nucleophile is the Thr-210. Positions 210, 231, and 312 each coordinate 1-(9Z-octadecenoyl)-sn-glycero-3-phosphate. Residues Thr-210, Asn-231, and Asp-312 each contribute to the 1-hexadecanoyl-sn-glycero-3-phosphate site. 1-tetradecanoyl-sn-glycerol 3-phosphate-binding residues include Thr-210, Asn-231, and Asp-312. The Zn(2+) site is built by Asp-312, His-316, Asp-359, and His-360. Cystine bridges form between Cys-367-Cys-469, Cys-414-Cys-831, Cys-567-Cys-692, Cys-569-Cys-677, and Cys-800-Cys-810. Asn-411 carries an N-linked (GlcNAc...) asparagine glycan. His-475 is a Zn(2+) binding site. 1-(9Z-octadecenoyl)-sn-glycero-3-phosphate is bound at residue His-475. 1-hexadecanoyl-sn-glycero-3-phosphate is bound at residue His-475. His-475 contacts 1-tetradecanoyl-sn-glycerol 3-phosphate. The N-linked (GlcNAc...) asparagine glycan is linked to Asn-525. The interval 623–888 is nuclease-like domain; sequence LYGRPAVLYR…TYLQTYESEI (266 aa). Positions 765, 767, 769, 771, and 773 each coordinate Ca(2+). A glycan (N-linked (GlcNAc...) asparagine) is linked at Asn-832. The tract at residues 855–876 is required for secretion; that stretch reads IEHLTSLDFFRKTSRSYPEILT.

The protein belongs to the nucleotide pyrophosphatase/phosphodiesterase family. Zn(2+) serves as cofactor. Ca(2+) is required as a cofactor. Post-translationally, N-glycosylation, but not furin-cleavage, plays a critical role on secretion and on lysoPLD activity. In terms of processing, the interdomain disulfide bond between Cys-414 and Cys-831 is essential for catalytic activity. Detected in fetal serum (at protein level).

The protein resides in the secreted. The enzyme catalyses a 1-O-alkyl-sn-glycero-3-phosphoethanolamine + H2O = a 1-O-alkyl-sn-glycero-3-phosphate + ethanolamine + H(+). The catalysed reaction is a 1-acyl-sn-glycero-3-phosphoethanolamine + H2O = a 1-acyl-sn-glycero-3-phosphate + ethanolamine + H(+). It catalyses the reaction 1-(9Z-octadecenoyl)-sn-glycero-3-phosphoethanolamine + H2O = 1-(9Z-octadecenoyl)-sn-glycero-3-phosphate + ethanolamine + H(+). It carries out the reaction a 1-O-alkyl-sn-glycero-3-phosphocholine + H2O = a 1-O-alkyl-sn-glycero-3-phosphate + choline + H(+). The enzyme catalyses 1-O-(9Z-octadecenyl)-sn-glycero-3-phosphocholine + H2O = 1-O-(9Z-octadecenyl)-sn-glycero-3-phosphate + choline + H(+). The catalysed reaction is 1-O-hexadecyl-sn-glycero-3-phosphocholine + H2O = 1-O-hexadecyl-sn-glycero-3-phosphate + choline + H(+). It catalyses the reaction a 1-O-(1Z-alkenyl)-sn-glycero-3-phosphocholine + H2O = a 1-O-(1Z-alkenyl)-sn-glycero-3-phosphate + choline + H(+). It carries out the reaction a 1-acyl-sn-glycero-3-phosphocholine + H2O = a 1-acyl-sn-glycero-3-phosphate + choline + H(+). The enzyme catalyses 1-dodecanoyl-sn-glycero-3-phosphocholine + H2O = 1-dodecanoyl-sn-glycerol 3-phosphate + choline + H(+). The catalysed reaction is 1-(9Z-octadecenoyl)-sn-glycero-3-phosphocholine + H2O = 1-(9Z-octadecenoyl)-sn-glycero-3-phosphate + choline + H(+). It catalyses the reaction 1-tetradecanoyl-sn-glycero-3-phosphocholine + H2O = 1-tetradecanoyl-sn-glycerol 3-phosphate + choline + H(+). It carries out the reaction 1-decanoyl-sn-glycero-3-phosphocholine + H2O = 1-decanoyl-sn-glycero-3-phosphate + choline + H(+). The enzyme catalyses 1-octadecanoyl-sn-glycero-3-phosphocholine + H2O = 1-octadecanoyl-sn-glycero-3-phosphate + choline + H(+). The catalysed reaction is 1-hexadecanoyl-sn-glycero-3-phosphocholine + H2O = 1-hexadecanoyl-sn-glycero-3-phosphate + choline + H(+). It catalyses the reaction 1-hexanoyl-sn-glycero-3-phosphocholine + H2O = 1-hexanoyl-sn-glycero-3-phosphate + choline + H(+). It carries out the reaction 1-(9Z,12Z)-octadecadienoyl-sn-glycero-3-phosphocholine + H2O = 1-(9Z,12Z)-octadecadienoyl-sn-glycero-3-phosphate + choline + H(+). The enzyme catalyses sphing-4-enine-phosphocholine + H2O = sphing-4-enine 1-phosphate + choline + H(+). The catalysed reaction is 1-(5Z,8Z,11Z,14Z-eicosatetraenoyl)-sn-glycero-3-phosphocholine + H2O = 1-(5Z,8Z,11Z,14Z-eicosatetraenoyl)-sn-glycero-3-phosphate + choline + H(+). It catalyses the reaction a 2-acyl-sn-glycero-3-phosphocholine + H2O = a 2-acyl-sn-glycerol 3-phosphate + choline + H(+). It carries out the reaction a 1,2-diacyl-sn-glycero-3-phosphocholine + H2O = a 1,2-diacyl-sn-glycero-3-phosphate + choline + H(+). The enzyme catalyses 1,2-dioctanoyl-sn-glycero-3-phosphocholine + H2O = 1,2-dioctanoyl-sn-glycero-3-phosphate + choline + H(+). The catalysed reaction is 1,2-didecanoyl-sn-glycero-3-phosphocholine + H2O = 1,2-didecanoyl-sn-glycero-3-phosphate + choline + H(+). It catalyses the reaction a 1-acyl-sn-glycero-3-phospho-L-serine + H2O = a 1-acyl-sn-glycero-3-phosphate + L-serine + H(+). It carries out the reaction 1-(9Z-octadecenoyl)-sn-glycero-3-phospho-L-serine + H2O = 1-(9Z-octadecenoyl)-sn-glycero-3-phosphate + L-serine + H(+). The enzyme catalyses a 2-acyl-sn-glycero-3-phospho-L-serine + H2O = a 2-acyl-sn-glycerol 3-phosphate + L-serine + H(+). Its function is as follows. Secreted lysophospholipase D that hydrolyzes lysophospholipids to produce the signaling molecule lysophosphatidic acid (LPA) in extracellular fluids. Its major substrate is lysophosphatidylcholine. Can also act on sphingosylphosphorylcholine producing sphingosine-1-phosphate, a modulator of cell motility. Can hydrolyze, in vitro, bis-pNPP, to some extent pNP-TMP, and barely ATP. Involved in several motility-related processes such as angiogenesis and neurite outgrowth. Acts as an angiogenic factor by stimulating migration of smooth muscle cells and microtubule formation. Stimulates migration of melanoma cells, probably via a pertussis toxin-sensitive G protein. May have a role in induction of parturition. Possible involvement in cell proliferation and adipose tissue development. Required for LPA production in activated platelets, cleaves the sn-1 lysophospholipids to generate sn-1 lysophosphatidic acids containing predominantly 18:2 and 20:4 fatty acids. Shows a preference for the sn-1 to the sn-2 isomer of 1-O-alkyl-sn-glycero-3-phosphocholine (lyso-PAF). The polypeptide is Autotaxin (Bos taurus (Bovine)).